A 276-amino-acid chain; its full sequence is Carboxysome assembly protein CcmO (276 aa).

2 consecutive BMC domains span residues 16–100 (ALGV…AVLP) and 120–204 (AIGL…DSLP). Disordered stretches follow at residues 200 to 219 (MDSLPEPQSDSEAAQPLQLP) and 252 to 276 (QSALELAQETPLAEPLELPNPRDDQ).

Belongs to the bacterial microcompartments protein family. In terms of assembly, homooligomerizes, possibly as a trimer, interacts with CcmK2 in the carboxysome.

The protein localises to the carboxysome. Its function is as follows. Required for formation of the carboxysome, a polyhedral inclusion where RuBisCO (ribulose bisphosphate carboxylase, rbcL-rbcS) is sequestered. Required for recruitment of major shell protein CcmK2 to the pre-carboxysome. Suggested to be a carboxysome shell protein, but it is not detected in gels, mass spectrometry or by protein sequencing. In terms of biological role, beta-carboxysome assembly initiates when soluble RuBisCO is condensed into a liquid matrix in a pre-carboxysome by the RbcS-like domains of probably both CcmM58 and CcmM35. CcmN interacts with the N-terminus of CcmM58, and then recruits the CcmK2 major shell protein via CcmN's encapsulation peptide. Shell formation requires CcmK proteins and CcmO. CcmL caps the otherwise elongated carboxysome. Once fully encapsulated carboxysomes are formed, they migrate within the cell probably via interactions with the cytoskeleton. This Synechococcus elongatus (strain ATCC 33912 / PCC 7942 / FACHB-805) (Anacystis nidulans R2) protein is Carboxysome assembly protein CcmO.